Consider the following 130-residue polypeptide: MKLVYLVLGAVALLLLGGPDSVLSSSSGNLHTFVGCAVREFTFMAKKPGCRGLRITTDACWGRCETWEKPILEPPYIEAYHRVCTYNETRQVTVKLPNCAPGVDPFYTYPMAVRCDCGACSTATTECETI.

An N-terminal signal peptide occupies residues 1 to 24; the sequence is MKLVYLVLGAVALLLLGGPDSVLS. Disulfide bonds link C36-C84, C50-C99, C60-C115, C64-C117, and C120-C127. An N-linked (GlcNAc...) asparagine glycan is attached at N87.

The protein belongs to the glycoprotein hormones subunit beta family. As to quaternary structure, heterodimer with GPHA2; this heterodimer interacts with thyroid-stimulating hormone receptor (TSHR), and hence stimulates cAMP production. N-glycosylated. Expressed in the anterior lobe of pituitary.

It is found in the secreted. Its function is as follows. Functions as a heterodimeric glycoprotein hormone with GPHA2 able to bind and activate the thyroid-stimulating hormone receptor (TSHR), leading to increased cAMP production. Plays a central role in controlling thyroid cell metabolism. The sequence is that of Glycoprotein hormone beta-5 (Gphb5) from Mus musculus (Mouse).